Here is a 294-residue protein sequence, read N- to C-terminus: Phosphate acetyltransferase (294 aa).

The protein belongs to the phosphate acetyltransferase and butyryltransferase family. Homotetramer.

It is found in the cytoplasm. The catalysed reaction is acetyl-CoA + phosphate = acetyl phosphate + CoA. Its pathway is metabolic intermediate biosynthesis; acetyl-CoA biosynthesis; acetyl-CoA from acetate: step 2/2. In terms of biological role, in addition to acetyl-CoA (100%), the enzyme accepts propionyl-CoA (60%) and butyryl-CoA (30%). This chain is Phosphate acetyltransferase (pta), found in Thermotoga maritima (strain ATCC 43589 / DSM 3109 / JCM 10099 / NBRC 100826 / MSB8).